Consider the following 206-residue polypeptide: MARYIGPKCKLSRREGTDLFLKSGARALESKCNIETPPGVHGQRRGRLSDYGTQLREKQKVRRIYGVLERQFSGYYKEAASRKGATGENLLQLLECRLDNVVYRMGFGSTRAESRQLVSHKSITVNGQTVNIPSYQVKAGDVVAVREKCRNQLRIAQALELCAQRGRVEWVEVDADKKSGVFKNVPARSDLSADINENLIVELYSK.

One can recognise an S4 RNA-binding domain in the interval 96 to 157 (CRLDNVVYRM…KCRNQLRIAQ (62 aa)).

Belongs to the universal ribosomal protein uS4 family. As to quaternary structure, part of the 30S ribosomal subunit. Contacts protein S5. The interaction surface between S4 and S5 is involved in control of translational fidelity.

In terms of biological role, one of the primary rRNA binding proteins, it binds directly to 16S rRNA where it nucleates assembly of the body of the 30S subunit. Functionally, with S5 and S12 plays an important role in translational accuracy. The chain is Small ribosomal subunit protein uS4 from Stutzerimonas stutzeri (strain A1501) (Pseudomonas stutzeri).